The sequence spans 554 residues: Membrane protein insertase YidC (554 aa).

Transmembrane regions (helical) follow at residues 7 to 24 (VLWV…DNWQ), 362 to 382 (FVGN…AVFF), 436 to 456 (LPVV…LASV), 475 to 495 (PFFI…SLNP), and 510 to 530 (PIAF…YYVV).

This sequence belongs to the OXA1/ALB3/YidC family. Type 1 subfamily. In terms of assembly, interacts with the Sec translocase complex via SecD. Specifically interacts with transmembrane segments of nascent integral membrane proteins during membrane integration.

The protein resides in the cell inner membrane. Its function is as follows. Required for the insertion and/or proper folding and/or complex formation of integral membrane proteins into the membrane. Involved in integration of membrane proteins that insert both dependently and independently of the Sec translocase complex, as well as at least some lipoproteins. Aids folding of multispanning membrane proteins. In Burkholderia ambifaria (strain MC40-6), this protein is Membrane protein insertase YidC.